A 153-amino-acid polypeptide reads, in one-letter code: Gamma-glutamylaminecyclotransferase (153 aa).

Residue 7 to 10 coordinates substrate; sequence YGTL. E82 functions as the Proton acceptor in the catalytic mechanism. A disordered region spans residues 130–153; the sequence is QLPHHDSYDSEGPHGLRYNPRENR. A compositionally biased stretch (basic and acidic residues) spans 132–153; that stretch reads PHHDSYDSEGPHGLRYNPRENR.

This sequence belongs to the gamma-glutamylcyclotransferase family. In terms of assembly, monomer.

It carries out the reaction epsilon-(gamma-L-glutamyl)-L-lysine = 5-oxo-L-proline + L-lysine. Contributes to degradation of proteins cross-linked by transglutaminases by degrading the cross-link between a lysine and a glutamic acid residue. Catalyzes the formation of 5-oxo-L-proline from L-gamma-glutamyl-L-epsilon-lysine. Inactive with L-gamma-glutamyl-alpha-amino acid substrates such as L-gamma-glutamyl-L-alpha-cysteine and L-gamma-glutamyl-L-alpha-alanine. This Homo sapiens (Human) protein is Gamma-glutamylaminecyclotransferase (GGACT).